Reading from the N-terminus, the 85-residue chain is Large ribosomal subunit protein bL27 (85 aa).

The tract at residues 1–24 (MAHKKGVGSSRNGRDSDGQRLGCK) is disordered.

This sequence belongs to the bacterial ribosomal protein bL27 family.

The chain is Large ribosomal subunit protein bL27 from Geotalea daltonii (strain DSM 22248 / JCM 15807 / FRC-32) (Geobacter daltonii).